The primary structure comprises 682 residues: Potassium-transporting ATPase ATP-binding subunit (682 aa).

The next 4 helical transmembrane spans lie at 34 to 54, 62 to 82, 219 to 239, and 254 to 274; these read PVMF…IAMA, ALFS…ANFA, IALT…TATL, and VLVA…LSAI. Residue D307 is the 4-aspartylphosphate intermediate of the active site. Residues D344, E348, 377 to 384, and K395 each bind ATP; that span reads FTAQSRMS. Mg(2+) is bound by residues D518 and D522. 3 helical membrane passes run 588–608, 616–636, and 656–676; these read FAII…LNIM, AILS…PLAL, and IYGL…DLLL.

Belongs to the cation transport ATPase (P-type) (TC 3.A.3) family. Type IA subfamily. As to quaternary structure, the system is composed of three essential subunits: KdpA, KdpB and KdpC.

It localises to the cell inner membrane. It carries out the reaction K(+)(out) + ATP + H2O = K(+)(in) + ADP + phosphate + H(+). Functionally, part of the high-affinity ATP-driven potassium transport (or Kdp) system, which catalyzes the hydrolysis of ATP coupled with the electrogenic transport of potassium into the cytoplasm. This subunit is responsible for energy coupling to the transport system and for the release of the potassium ions to the cytoplasm. In Escherichia coli O139:H28 (strain E24377A / ETEC), this protein is Potassium-transporting ATPase ATP-binding subunit.